The chain runs to 336 residues: GTP 3',8-cyclase (336 aa).

The Radical SAM core domain maps to 17 to 238 (GFSRRFHYLR…WTQQNRNLTD (222 aa)). Arginine 26 contributes to the GTP binding site. Cysteine 33 and cysteine 37 together coordinate [4Fe-4S] cluster. S-adenosyl-L-methionine is bound at residue tyrosine 39. Cysteine 40 contacts [4Fe-4S] cluster. Arginine 75 contributes to the GTP binding site. Glycine 79 contacts S-adenosyl-L-methionine. A GTP-binding site is contributed by threonine 106. S-adenosyl-L-methionine is bound at residue serine 130. Lysine 167 serves as a coordination point for GTP. Methionine 201 provides a ligand contact to S-adenosyl-L-methionine. Residues cysteine 264 and cysteine 267 each coordinate [4Fe-4S] cluster. 269-271 (RLR) contributes to the GTP binding site. Cysteine 281 is a [4Fe-4S] cluster binding site.

It belongs to the radical SAM superfamily. MoaA family. As to quaternary structure, monomer and homodimer. [4Fe-4S] cluster serves as cofactor.

The enzyme catalyses GTP + AH2 + S-adenosyl-L-methionine = (8S)-3',8-cyclo-7,8-dihydroguanosine 5'-triphosphate + 5'-deoxyadenosine + L-methionine + A + H(+). It participates in cofactor biosynthesis; molybdopterin biosynthesis. Catalyzes the cyclization of GTP to (8S)-3',8-cyclo-7,8-dihydroguanosine 5'-triphosphate. The polypeptide is GTP 3',8-cyclase (Tolumonas auensis (strain DSM 9187 / NBRC 110442 / TA 4)).